A 62-amino-acid polypeptide reads, in one-letter code: U10-hottentoxin-Hj2a (62 aa).

Residues 1 to 22 (MQKLLIILILFCILKFNVDVEG) form the signal peptide. Disulfide bonds link cysteine 28/cysteine 46, cysteine 33/cysteine 59, and cysteine 37/cysteine 61.

It belongs to the short scorpion toxin superfamily. Potassium channel inhibitor family. Alpha-KTx 23 subfamily. In terms of tissue distribution, expressed by the venom gland.

The protein resides in the secreted. Functionally, may block potassium channels. The protein is U10-hottentoxin-Hj2a of Hottentotta judaicus (Black scorpion).